Consider the following 64-residue polypeptide: Large ribosomal subunit protein uL30 (64 aa).

The disordered stretch occupies residues 1–22 (MAKAAKTIKVEQTRSAIRRQHS).

Belongs to the universal ribosomal protein uL30 family. In terms of assembly, part of the 50S ribosomal subunit.

The sequence is that of Large ribosomal subunit protein uL30 from Nitrobacter hamburgensis (strain DSM 10229 / NCIMB 13809 / X14).